The following is a 622-amino-acid chain: Elongation factor 4 (622 aa).

The region spanning 17–201 (ALIRNFCIIA…KVVAEVPAPV (185 aa)) is the tr-type G domain. GTP is bound by residues 29–34 (DHGKST) and 148–151 (NKID).

Belongs to the TRAFAC class translation factor GTPase superfamily. Classic translation factor GTPase family. LepA subfamily.

Its subcellular location is the cell membrane. It catalyses the reaction GTP + H2O = GDP + phosphate + H(+). Functionally, required for accurate and efficient protein synthesis under certain stress conditions. May act as a fidelity factor of the translation reaction, by catalyzing a one-codon backward translocation of tRNAs on improperly translocated ribosomes. Back-translocation proceeds from a post-translocation (POST) complex to a pre-translocation (PRE) complex, thus giving elongation factor G a second chance to translocate the tRNAs correctly. Binds to ribosomes in a GTP-dependent manner. This chain is Elongation factor 4, found in Streptomyces coelicolor (strain ATCC BAA-471 / A3(2) / M145).